The sequence spans 245 residues: Tetraspanin-6 (245 aa).

The Cytoplasmic segment spans residues 1–19 (MASPSRRLQTKPVITCLKS). A helical transmembrane segment spans residues 20 to 40 (VLLIYTFIFWITGVILLAVGI). The Extracellular portion of the chain corresponds to 41–59 (WGKVSLENYFSLLNEKATN). A helical membrane pass occupies residues 60–80 (VPFVLIGTGTVIILLGTFGCF). At 81–93 (ATCRTSAWMLKLY) the chain is on the cytoplasmic side. Residues 94–114 (AMFLTLIFLVELVAAIVGFVF) form a helical membrane-spanning segment. Residues 115–208 (RHEIKNSFKS…IKVMTTIESE (94 aa)) are Extracellular-facing. N-linked (GlcNAc...) asparagine glycosylation is present at N134. A helical transmembrane segment spans residues 209–229 (MGVVAGISFGVACFQLIGIFL). At 230–245 (AYCLSRAITNNQYEIV) the chain is on the cytoplasmic side.

The protein belongs to the tetraspanin (TM4SF) family.

Its subcellular location is the membrane. The chain is Tetraspanin-6 (Tspan6) from Mus musculus (Mouse).